The chain runs to 322 residues: Beta-ketoacyl-[acyl-carrier-protein] synthase III (322 aa).

Residues cysteine 113 and histidine 249 contribute to the active site. Residues 250–254 are ACP-binding; it reads QANLR. Asparagine 279 is an active-site residue.

The protein belongs to the thiolase-like superfamily. FabH family. In terms of assembly, homodimer.

It is found in the cytoplasm. It carries out the reaction malonyl-[ACP] + acetyl-CoA + H(+) = 3-oxobutanoyl-[ACP] + CO2 + CoA. Its pathway is lipid metabolism; fatty acid biosynthesis. Catalyzes the condensation reaction of fatty acid synthesis by the addition to an acyl acceptor of two carbons from malonyl-ACP. Catalyzes the first condensation reaction which initiates fatty acid synthesis and may therefore play a role in governing the total rate of fatty acid production. Possesses both acetoacetyl-ACP synthase and acetyl transacylase activities. Its substrate specificity determines the biosynthesis of branched-chain and/or straight-chain of fatty acids. This Marinobacter nauticus (strain ATCC 700491 / DSM 11845 / VT8) (Marinobacter aquaeolei) protein is Beta-ketoacyl-[acyl-carrier-protein] synthase III.